Reading from the N-terminus, the 115-residue chain is NADH-ubiquinone oxidoreductase chain 3 (115 aa).

3 helical membrane passes run 4-24 (LTALSVNIALSTCLIAIAFWL), 55-75 (FFLVAITFLLFDLEIALLLPL), and 87-107 (MMLTAFILVSVLALGLAYEWM).

Belongs to the complex I subunit 3 family. In terms of assembly, core subunit of respiratory chain NADH dehydrogenase (Complex I) which is composed of 45 different subunits. Interacts with TMEM186. Interacts with TMEM242.

It localises to the mitochondrion inner membrane. It catalyses the reaction a ubiquinone + NADH + 5 H(+)(in) = a ubiquinol + NAD(+) + 4 H(+)(out). Core subunit of the mitochondrial membrane respiratory chain NADH dehydrogenase (Complex I) which catalyzes electron transfer from NADH through the respiratory chain, using ubiquinone as an electron acceptor. Essential for the catalytic activity of complex I. This Peromyscus boylii (Brush deermouse) protein is NADH-ubiquinone oxidoreductase chain 3.